Consider the following 143-residue polypeptide: Holo-[acyl-carrier-protein] synthase (143 aa).

The Mg(2+) site is built by aspartate 9 and glutamate 63.

Belongs to the P-Pant transferase superfamily. AcpS family. Mg(2+) serves as cofactor.

Its subcellular location is the cytoplasm. It carries out the reaction apo-[ACP] + CoA = holo-[ACP] + adenosine 3',5'-bisphosphate + H(+). In terms of biological role, transfers the 4'-phosphopantetheine moiety from coenzyme A to a Ser of acyl-carrier-protein. This Burkholderia pseudomallei (strain 668) protein is Holo-[acyl-carrier-protein] synthase.